A 426-amino-acid polypeptide reads, in one-letter code: MKLLILGNHTCGNRGDSAILRGLLDAINILNPHAEVDVMSRYPVSSSWLLNRPVMGDPLFLQMKQHNSAAGVVGRVKKVLRRRYQHQVLLSRVTDTGKLRNIAIAQGFTDFVRLLSGYDAIIQVGGSFFVDLYGVPQFEHALCTFMAKKPLFMIGHSVGPFQDEQFNQLANYVFGHCDALILRESVSFDLMKRSNITTAKVEHGVDTAWLVDHHTEDFTASYAVQHWLDVAAQQKTVAITLRELAPFDKRLGTTQQAYEKAFAGVVNRILDEGYQVIALSTCTGIDSYNKDDRMVALNLRQHISDPARYHVVMDELNDLEMGKILGACELTVGTRLHSAIISMNFATPAIAINYEHKSAGIMQQLGLPEMAIDIRHLLDGSLQAMVADTLGQLPALNARLSEAVSRERQTGMQMVQSVLERIGEVK.

Belongs to the polysaccharide pyruvyl transferase family.

The protein operates within slime biogenesis; slime polysaccharide biosynthesis. This Escherichia coli (strain K12) protein is Colanic acid biosynthesis protein WcaK (wcaK).